The chain runs to 234 residues: Kappa-casein (234 aa).

The N-terminal stretch at 1–21 (MMKSFLLVVNIVALTLPFLAA) is a signal peptide. Repeat copies occupy residues 127 to 153 (LGKA…QPTV), 154 to 179 (SAGD…EEAR), and 180 to 207 (ESPE…PRES). The segment at 127–207 (LGKATILSTD…AVPSEEPRES (81 aa)) is 3 X 27 AA tandem repeats. A disordered region spans residues 143–234 (QTPVSAAQPT…STGPAIASMA (92 aa)). O-linked (GalNAc...) threonine glycosylation is present at threonine 144. The span at 144–171 (TPVSAAQPTVSAGDTPEVSSQFIDTPDT) shows a compositional bias: polar residues. A Phosphothreonine modification is found at threonine 158. Serine 162 is modified (phosphoserine; alternate). The O-linked (GalNAc...) serine; alternate glycan is linked to serine 162.

Belongs to the kappa-casein family. Mammary gland specific. Secreted in milk.

Its subcellular location is the secreted. In terms of biological role, kappa-casein stabilizes micelle formation, preventing casein precipitation in milk. The chain is Kappa-casein (CSN3) from Cavia porcellus (Guinea pig).